Reading from the N-terminus, the 262-residue chain is uncharacterized protein (262 aa).

Residues 41–118 are a coiled coil; that stretch reads ELQKNEKIDK…EEKAEDFINK (78 aa).

This is an uncharacterized protein from Plasmodium falciparum (isolate 3D7).